The primary structure comprises 122 residues: Nodulation protein NolR (122 aa).

The 95-residue stretch at 15-109 (EKHEDAEIAA…ALSDIYGDDT (95 aa)) folds into the HTH arsR-type domain. Positions 49 to 68 (VGALAHKVGLSQSALSQHLS) form a DNA-binding region, H-T-H motif.

In terms of assembly, binds to the operator site in homodimeric form.

Functionally, negative transacting factor controlling the nod regulon. May control the expression of nodD1, nodD2, nodD3 and nodABC genes. This is Nodulation protein NolR (nolR) from Rhizobium meliloti (Ensifer meliloti).